Reading from the N-terminus, the 317-residue chain is Pseudouridine-5'-phosphate glycosidase (317 aa).

Catalysis depends on Glu-27, which acts as the Proton donor. Residues Lys-89 and Val-109 each contribute to the substrate site. Residue Asp-141 participates in Mn(2+) binding. Position 143 to 145 (Ser-143 to Asp-145) interacts with substrate. The active-site Nucleophile is Lys-162.

This sequence belongs to the pseudouridine-5'-phosphate glycosidase family. Homotrimer. Requires Mn(2+) as cofactor.

The catalysed reaction is D-ribose 5-phosphate + uracil = psi-UMP + H2O. Functionally, catalyzes the reversible cleavage of pseudouridine 5'-phosphate (PsiMP) to ribose 5-phosphate and uracil. Functions biologically in the cleavage direction, as part of a pseudouridine degradation pathway. This is Pseudouridine-5'-phosphate glycosidase from Sorangium cellulosum (strain So ce56) (Polyangium cellulosum (strain So ce56)).